Here is a 695-residue protein sequence, read N- to C-terminus: uncharacterized protein (695 aa).

This is an uncharacterized protein from Xanthomonas campestris pv. campestris (strain B100).